The following is a 395-amino-acid chain: Vascular endothelial growth factor A, long form (395 aa).

Disordered stretches follow at residues 1 to 45 (MTDR…VEGV) and 73 to 175 (EAEP…AGPG). Residues 73 to 85 (EAEPSGAARSASS) show a composition bias toward low complexity. The segment covering 91-102 (QPEEGEEEEEKE) has biased composition (acidic residues). Low complexity-rich tracts occupy residues 123–143 (AAVCADSAPAARAPQALARAS) and 165–175 (RRGSASRAGPG). Cystine bridges form between cysteine 232–cysteine 274, cysteine 263–cysteine 308, and cysteine 267–cysteine 310. An N-linked (GlcNAc...) asparagine glycan is attached at asparagine 281. The span at 314–323 (KDRARQEKKS) shows a compositional bias: basic and acidic residues. The disordered stretch occupies residues 314–344 (KDRARQEKKSVRGKGKGQKRKRKKSRYKSWS). Residues 324 to 340 (VRGKGKGQKRKRKKSRY) show a composition bias toward basic residues.

This sequence belongs to the PDGF/VEGF growth factor family. In terms of assembly, homodimer; disulfide-linked. Also found as heterodimer with PGF. Interacts with NRP1. Interacts with isoform 2 of BSG. Interacts with CD82; this interaction inhibits VEGFA-mediated signaling pathway. In terms of processing, produced by use of an alternative upstream CUG codon and post-translationally processed into the N-terminal N-VEGF form and the C-terminal secreted VEGFA form. Higher expression in pituitary tumors than the pituitary gland. As to expression, widely expressed. In terms of tissue distribution, not widely expressed.

It is found in the cytoplasm. The protein localises to the nucleus. It localises to the secreted. Its subcellular location is the endoplasmic reticulum. The protein resides in the golgi apparatus. It is found in the extracellular space. The protein localises to the extracellular matrix. Participates in the induction of key genes involved in the response to hypoxia and in the induction of angiogenesis such as HIF1A. Involved in protecting cells from hypoxia-mediated cell death. Its function is as follows. Growth factor active in angiogenesis, vasculogenesis and endothelial cell growth. Induces endothelial cell proliferation, promotes cell migration, inhibits apoptosis and induces permeabilization of blood vessels. Binds to the FLT1/VEGFR1 and KDR/VEGFR2 receptors, heparan sulfate and heparin. Binds to the NRP1/neuropilin-1 receptor. Binding to NRP1 initiates a signaling pathway needed for motor neuron axon guidance and cell body migration, including for the caudal migration of facial motor neurons from rhombomere 4 to rhombomere 6 during embryonic development. Also binds the DEAR/FBXW7-AS1 receptor. In terms of biological role, binds to the KDR receptor but does not activate downstream signaling pathways, does not activate angiogenesis and inhibits tumor growth. The polypeptide is Vascular endothelial growth factor A, long form (VEGFA) (Homo sapiens (Human)).